Consider the following 208-residue polypeptide: LexA repressor (208 aa).

Positions 29 to 49 form a DNA-binding region, H-T-H motif; it reads VREICGAVGLSSTSTVHGHIN. Residues S129 and K167 each act as for autocatalytic cleavage activity in the active site.

It belongs to the peptidase S24 family. As to quaternary structure, homodimer.

It catalyses the reaction Hydrolysis of Ala-|-Gly bond in repressor LexA.. Functionally, represses a number of genes involved in the response to DNA damage (SOS response), including recA and lexA. In the presence of single-stranded DNA, RecA interacts with LexA causing an autocatalytic cleavage which disrupts the DNA-binding part of LexA, leading to derepression of the SOS regulon and eventually DNA repair. The polypeptide is LexA repressor (Limosilactobacillus fermentum (strain NBRC 3956 / LMG 18251) (Lactobacillus fermentum)).